A 439-amino-acid polypeptide reads, in one-letter code: Ribosomal protein uS12 methylthiotransferase RimO (439 aa).

Positions 5 to 115 (PKIGFVSLGC…LIEAVHTHAP (111 aa)) constitute an MTTase N-terminal domain. Residues C14, C50, C79, C146, C150, and C153 each contribute to the [4Fe-4S] cluster site. The 238-residue stretch at 132 to 369 (LTPRHYSYLK…MGLQAQISTD (238 aa)) folds into the Radical SAM core domain. The 68-residue stretch at 372 to 439 (QRFVGTEQQV…ESTEYDLIAD (68 aa)) folds into the TRAM domain.

This sequence belongs to the methylthiotransferase family. RimO subfamily. [4Fe-4S] cluster serves as cofactor.

It is found in the cytoplasm. It catalyses the reaction L-aspartate(89)-[ribosomal protein uS12]-hydrogen + (sulfur carrier)-SH + AH2 + 2 S-adenosyl-L-methionine = 3-methylsulfanyl-L-aspartate(89)-[ribosomal protein uS12]-hydrogen + (sulfur carrier)-H + 5'-deoxyadenosine + L-methionine + A + S-adenosyl-L-homocysteine + 2 H(+). In terms of biological role, catalyzes the methylthiolation of an aspartic acid residue of ribosomal protein uS12. This is Ribosomal protein uS12 methylthiotransferase RimO from Francisella tularensis subsp. novicida (strain U112).